The following is a 379-amino-acid chain: Cytochrome b (379 aa).

Helical transmembrane passes span Phe-33–Met-53, Trp-77–Val-98, Trp-113–Leu-133, and Phe-178–Leu-198. Heme b-binding residues include His-83 and His-97. Residues His-182 and His-196 each contribute to the heme b site. Position 201 (His-201) interacts with a ubiquinone. Helical transmembrane passes span Ile-226 to Phe-246, Leu-288 to Asn-308, Ile-320 to Gly-340, and Phe-347 to Pro-367.

The protein belongs to the cytochrome b family. In terms of assembly, the cytochrome bc1 complex contains 11 subunits: 3 respiratory subunits (MT-CYB, CYC1 and UQCRFS1), 2 core proteins (UQCRC1 and UQCRC2) and 6 low-molecular weight proteins (UQCRH/QCR6, UQCRB/QCR7, UQCRQ/QCR8, UQCR10/QCR9, UQCR11/QCR10 and a cleavage product of UQCRFS1). This cytochrome bc1 complex then forms a dimer. It depends on heme b as a cofactor.

The protein localises to the mitochondrion inner membrane. In terms of biological role, component of the ubiquinol-cytochrome c reductase complex (complex III or cytochrome b-c1 complex) that is part of the mitochondrial respiratory chain. The b-c1 complex mediates electron transfer from ubiquinol to cytochrome c. Contributes to the generation of a proton gradient across the mitochondrial membrane that is then used for ATP synthesis. The polypeptide is Cytochrome b (MT-CYB) (Akodon dayi (Day's grass mouse)).